The following is an 861-amino-acid chain: Translation initiation factor IF-2 (861 aa).

Residues 107–272 (AQKQQDIQRA…QRKKKSKVVQ (166 aa)) are disordered. The segment covering 115 to 128 (RAAEEAAAKERETE) has biased composition (basic and acidic residues). Polar residues-rich tracts occupy residues 148–158 (SVQQEAANMDT) and 169–180 (VDESVSATTAGG). Residues 210–228 (NKEDSEVRREPADAEDLKR) are compositionally biased toward basic and acidic residues. The span at 260–269 (RARQRKKKSK) shows a compositional bias: basic residues. Residues 362–531 (SRAPVVSVMG…LLQSEMLELT (170 aa)) form the tr-type G domain. The tract at residues 371 to 378 (GHVDHGKT) is G1. Residue 371-378 (GHVDHGKT) coordinates GTP. The interval 396-400 (GITQH) is G2. A G3 region spans residues 417-420 (DTPG). GTP is bound by residues 417-421 (DTPGH) and 471-474 (NKMD). Residues 471–474 (NKMD) are G4. Positions 507-509 (SAH) are G5.

Belongs to the TRAFAC class translation factor GTPase superfamily. Classic translation factor GTPase family. IF-2 subfamily.

Its subcellular location is the cytoplasm. Its function is as follows. One of the essential components for the initiation of protein synthesis. Protects formylmethionyl-tRNA from spontaneous hydrolysis and promotes its binding to the 30S ribosomal subunits. Also involved in the hydrolysis of GTP during the formation of the 70S ribosomal complex. In Hahella chejuensis (strain KCTC 2396), this protein is Translation initiation factor IF-2.